We begin with the raw amino-acid sequence, 929 residues long: Isoleucine--tRNA ligase (929 aa).

Residues 58-68 (PYANGDIHIGH) carry the 'HIGH' region motif. Glutamate 563 contributes to the L-isoleucyl-5'-AMP binding site. The 'KMSKS' region motif lies at 605–609 (KMSKS). Lysine 608 lines the ATP pocket. Positions 892, 895, 912, and 915 each coordinate Zn(2+).

Belongs to the class-I aminoacyl-tRNA synthetase family. IleS type 1 subfamily. Monomer. The cofactor is Zn(2+).

It localises to the cytoplasm. It carries out the reaction tRNA(Ile) + L-isoleucine + ATP = L-isoleucyl-tRNA(Ile) + AMP + diphosphate. Catalyzes the attachment of isoleucine to tRNA(Ile). As IleRS can inadvertently accommodate and process structurally similar amino acids such as valine, to avoid such errors it has two additional distinct tRNA(Ile)-dependent editing activities. One activity is designated as 'pretransfer' editing and involves the hydrolysis of activated Val-AMP. The other activity is designated 'posttransfer' editing and involves deacylation of mischarged Val-tRNA(Ile). This chain is Isoleucine--tRNA ligase, found in Neisseria gonorrhoeae (strain ATCC 700825 / FA 1090).